The sequence spans 294 residues: 33 kDa chaperonin (294 aa).

Intrachain disulfides connect cysteine 239–cysteine 241 and cysteine 272–cysteine 275.

The protein belongs to the HSP33 family. Post-translationally, under oxidizing conditions two disulfide bonds are formed involving the reactive cysteines. Under reducing conditions zinc is bound to the reactive cysteines and the protein is inactive.

Its subcellular location is the cytoplasm. In terms of biological role, redox regulated molecular chaperone. Protects both thermally unfolding and oxidatively damaged proteins from irreversible aggregation. Plays an important role in the bacterial defense system toward oxidative stress. This chain is 33 kDa chaperonin, found in Listeria welshimeri serovar 6b (strain ATCC 35897 / DSM 20650 / CCUG 15529 / CIP 8149 / NCTC 11857 / SLCC 5334 / V8).